A 181-amino-acid chain; its full sequence is ATP-dependent protease subunit HslV (181 aa).

The active site involves Thr-7. Residues Ala-165, Cys-168, and Thr-171 each coordinate Na(+).

It belongs to the peptidase T1B family. HslV subfamily. A double ring-shaped homohexamer of HslV is capped on each side by a ring-shaped HslU homohexamer. The assembly of the HslU/HslV complex is dependent on binding of ATP.

Its subcellular location is the cytoplasm. The enzyme catalyses ATP-dependent cleavage of peptide bonds with broad specificity.. Allosterically activated by HslU binding. Its function is as follows. Protease subunit of a proteasome-like degradation complex believed to be a general protein degrading machinery. In Lysinibacillus sphaericus (strain C3-41), this protein is ATP-dependent protease subunit HslV.